A 273-amino-acid polypeptide reads, in one-letter code: NH(3)-dependent NAD(+) synthetase (273 aa).

47–54 (GISGGQDS) provides a ligand contact to ATP. Aspartate 53 contributes to the Mg(2+) binding site. Arginine 139 contacts deamido-NAD(+). Threonine 159 provides a ligand contact to ATP. Position 164 (glutamate 164) interacts with Mg(2+). Deamido-NAD(+) contacts are provided by lysine 172 and aspartate 179. Positions 188 and 210 each coordinate ATP. Deamido-NAD(+) is bound at residue 259–260 (HK).

This sequence belongs to the NAD synthetase family. As to quaternary structure, homodimer.

It carries out the reaction deamido-NAD(+) + NH4(+) + ATP = AMP + diphosphate + NAD(+) + H(+). It functions in the pathway cofactor biosynthesis; NAD(+) biosynthesis; NAD(+) from deamido-NAD(+) (ammonia route): step 1/1. Catalyzes the ATP-dependent amidation of deamido-NAD to form NAD. Uses ammonia as a nitrogen source. This is NH(3)-dependent NAD(+) synthetase from Staphylococcus aureus (strain bovine RF122 / ET3-1).